The chain runs to 293 residues: Elongation factor Ts (293 aa).

Residues 80–83 are involved in Mg(2+) ion dislocation from EF-Tu; that stretch reads TDFV.

The protein belongs to the EF-Ts family.

The protein localises to the cytoplasm. Its function is as follows. Associates with the EF-Tu.GDP complex and induces the exchange of GDP to GTP. It remains bound to the aminoacyl-tRNA.EF-Tu.GTP complex up to the GTP hydrolysis stage on the ribosome. This is Elongation factor Ts from Burkholderia pseudomallei (strain 1106a).